The following is a 304-amino-acid chain: MDLVNHLPDRLLFAVPKKGRLYEKCCSLLKGVDIQFRRSNRLDIAISTNLPIALIFLPAADIPIFVGEGNCDLGITGLDQIKEADMFNSVEDLLDLQFGSCKLQIQVPAEGEITKPEQLVGKKIVSSFTKLSVDYFKTLENVEDETKLSTSIRYVGGSVEASCALGVADAIVDLVESGETMKAAGLTAIETILQTSAHLISSKKPKFPELVERIHQRFEGLMAAQKYVLCNYNAPRSILSAVLQITPGRRSATISALEKKSDENEEWVAVSSMVEKKKISDIMDDLKKAGASDILVFDIGNCRV.

This sequence belongs to the ATP phosphoribosyltransferase family.

The protein localises to the cytoplasm. The catalysed reaction is 1-(5-phospho-beta-D-ribosyl)-ATP + diphosphate = 5-phospho-alpha-D-ribose 1-diphosphate + ATP. It functions in the pathway amino-acid biosynthesis; L-histidine biosynthesis; L-histidine from 5-phospho-alpha-D-ribose 1-diphosphate: step 1/9. Its function is as follows. Catalyzes the condensation of ATP and 5-phosphoribose 1-diphosphate to form N'-(5'-phosphoribosyl)-ATP (PR-ATP). Has a crucial role in the pathway because the rate of histidine biosynthesis seems to be controlled primarily by regulation of the enzymatic activity. This is ATP phosphoribosyltransferase (HIS1) from Debaryomyces hansenii (strain ATCC 36239 / CBS 767 / BCRC 21394 / JCM 1990 / NBRC 0083 / IGC 2968) (Yeast).